Here is a 405-residue protein sequence, read N- to C-terminus: Intraflagellar transport protein 57 homolog (405 aa).

Residues 252 to 380 (ETLKTNILEN…AQLNLEVALL (129 aa)) are a coiled coil.

Belongs to the IFT57 family.

Its subcellular location is the cytoplasm. It is found in the cytoskeleton. The protein localises to the cilium basal body. Functionally, required for the formation of cilia. The chain is Intraflagellar transport protein 57 homolog from Drosophila melanogaster (Fruit fly).